Consider the following 159-residue polypeptide: Endoribonuclease YbeY (159 aa).

Positions 125, 129, and 135 each coordinate Zn(2+).

The protein belongs to the endoribonuclease YbeY family. It depends on Zn(2+) as a cofactor.

Its subcellular location is the cytoplasm. In terms of biological role, single strand-specific metallo-endoribonuclease involved in late-stage 70S ribosome quality control and in maturation of the 3' terminus of the 16S rRNA. This Brevibacillus brevis (strain 47 / JCM 6285 / NBRC 100599) protein is Endoribonuclease YbeY.